Consider the following 449-residue polypeptide: Tubulin alpha-1C chain (449 aa).

The MREC motif motif lies at methionine 1–cysteine 4. Glutamine 11 is a GTP binding site. Residue lysine 40 is modified to N6-acetyllysine. GTP is bound by residues glutamate 71, serine 140, glycine 144, threonine 145, threonine 179, asparagine 206, and asparagine 228. Glutamate 71 provides a ligand contact to Mg(2+). Glutamate 254 is a catalytic residue. Tyrosine 282 bears the 3'-nitrotyrosine mark. A disordered region spans residues glutamate 429–tyrosine 449. Residues aspartate 431–tyrosine 449 show a composition bias toward acidic residues. Tyrosine 432 carries the post-translational modification Phosphotyrosine. Serine 439 is subject to Phosphoserine. Tyrosine 449 carries the 3'-nitrotyrosine modification.

This sequence belongs to the tubulin family. As to quaternary structure, dimer of alpha and beta chains. A typical microtubule is a hollow water-filled tube with an outer diameter of 25 nm and an inner diameter of 15 nM. Alpha-beta heterodimers associate head-to-tail to form protofilaments running lengthwise along the microtubule wall with the beta-tubulin subunit facing the microtubule plus end conferring a structural polarity. Microtubules usually have 13 protofilaments but different protofilament numbers can be found in some organisms and specialized cells. Requires Mg(2+) as cofactor. Post-translationally, some glutamate residues at the C-terminus are polyglycylated, resulting in polyglycine chains on the gamma-carboxyl group. Glycylation is mainly limited to tubulin incorporated into axonemes (cilia and flagella) whereas glutamylation is prevalent in neuronal cells, centrioles, axonemes, and the mitotic spindle. Both modifications can coexist on the same protein on adjacent residues, and lowering polyglycylation levels increases polyglutamylation, and reciprocally. Cilia and flagella glycylation is required for their stability and maintenance. Flagella glycylation controls sperm motility. In terms of processing, some glutamate residues at the C-terminus are polyglutamylated, resulting in polyglutamate chains on the gamma-carboxyl group. Polyglutamylation plays a key role in microtubule severing by spastin (SPAST). SPAST preferentially recognizes and acts on microtubules decorated with short polyglutamate tails: severing activity by SPAST increases as the number of glutamates per tubulin rises from one to eight, but decreases beyond this glutamylation threshold. Glutamylation is also involved in cilia motility. Acetylation of alpha chains at Lys-40 is located inside the microtubule lumen. This modification has been correlated with increased microtubule stability, intracellular transport and ciliary assembly. Post-translationally, methylation of alpha chains at Lys-40 is found in mitotic microtubules and is required for normal mitosis and cytokinesis contributing to genomic stability. In terms of processing, nitration of Tyr-449 is irreversible and interferes with normal dynein intracellular distribution. Undergoes a tyrosination/detyrosination cycle, the cyclic removal and re-addition of a C-terminal tyrosine residue by the enzymes tubulin tyrosine carboxypeptidase (MATCAP1, VASH1 or VASH2) and tubulin tyrosine ligase (TTL), respectively. Post-translationally, tyrosination promotes microtubule interaction with CAP-Gly domain-containing proteins such as CLIP1, CLIP2 and DCTN1. Tyrosination regulates the initiation of dynein-dynactin motility via interaction with DCTN1, which brings the dynein-dynactin complex into contact with microtubules. In neurons, tyrosinated tubulins mediate the initiation of retrograde vesicle transport. In terms of processing, detyrosination is involved in metaphase plate congression by guiding chromosomes during mitosis: detyrosination promotes interaction with CENPE, promoting pole-proximal transport of chromosomes toward the equator. Detyrosination increases microtubules-dependent mechanotransduction in dystrophic cardiac and skeletal muscle. In cardiomyocytes, detyrosinated microtubules are required to resist to contractile compression during contraction: detyrosination promotes association with desmin (DES) at force-generating sarcomeres, leading to buckled microtubules and mechanical resistance to contraction.

The protein resides in the cytoplasm. The protein localises to the cytoskeleton. It carries out the reaction GTP + H2O = GDP + phosphate + H(+). Its function is as follows. Tubulin is the major constituent of microtubules, a cylinder consisting of laterally associated linear protofilaments composed of alpha- and beta-tubulin heterodimers. Microtubules grow by the addition of GTP-tubulin dimers to the microtubule end, where a stabilizing cap forms. Below the cap, tubulin dimers are in GDP-bound state, owing to GTPase activity of alpha-tubulin. This is Tubulin alpha-1C chain (TUBA1C) from Bos taurus (Bovine).